Consider the following 692-residue polypeptide: Elongation factor G (692 aa).

Residues 8-282 (DKTRNIGIMA…AVLDYLPAPT (275 aa)) form the tr-type G domain. GTP is bound by residues 17–24 (AHIDAGKT), 81–85 (DTPGH), and 135–138 (NKMD).

It belongs to the TRAFAC class translation factor GTPase superfamily. Classic translation factor GTPase family. EF-G/EF-2 subfamily.

It is found in the cytoplasm. In terms of biological role, catalyzes the GTP-dependent ribosomal translocation step during translation elongation. During this step, the ribosome changes from the pre-translocational (PRE) to the post-translocational (POST) state as the newly formed A-site-bound peptidyl-tRNA and P-site-bound deacylated tRNA move to the P and E sites, respectively. Catalyzes the coordinated movement of the two tRNA molecules, the mRNA and conformational changes in the ribosome. This chain is Elongation factor G, found in Bacillus pumilus (strain SAFR-032).